The sequence spans 389 residues: Chalcone synthase (389 aa).

Active-site residues include Cys-164, His-303, and Asn-336.

This sequence belongs to the thiolase-like superfamily. Chalcone/stilbene synthases family. Homodimer. In terms of tissue distribution, mainly expressed in flowers, to a lower extent in young leaves, and barely in mature leaves and twigs.

The catalysed reaction is (E)-4-coumaroyl-CoA + 3 malonyl-CoA + 3 H(+) = 2',4,4',6'-tetrahydroxychalcone + 3 CO2 + 4 CoA. Its pathway is secondary metabolite biosynthesis; flavonoid biosynthesis. In terms of biological role, the primary product of this enzyme is 4,2',4',6'-tetrahydroxychalcone (also termed naringenin-chalcone or chalcone) which can under specific conditions spontaneously isomerize into naringenin. The chain is Chalcone synthase from Rhododendron dauricum (Azalea daurica).